We begin with the raw amino-acid sequence, 322 residues long: HPr kinase/phosphorylase (322 aa).

Catalysis depends on residues His143 and Lys164. 158 to 165 contributes to the ATP binding site; sequence GRSGVGKS. Ser165 is a binding site for Mg(2+). Asp182 functions as the Proton acceptor; for phosphorylation activity. Proton donor; for dephosphorylation activity in the catalytic mechanism. Residues 206 to 215 form an important for the catalytic mechanism of both phosphorylation and dephosphorylation region; it reads MEIRGLGILN. Glu207 serves as a coordination point for Mg(2+). Arg250 is an active-site residue. The segment at 271–276 is important for the catalytic mechanism of dephosphorylation; the sequence is PVKPGR.

It belongs to the HPrK/P family. Homohexamer. Mg(2+) serves as cofactor.

The enzyme catalyses [HPr protein]-L-serine + ATP = [HPr protein]-O-phospho-L-serine + ADP + H(+). It carries out the reaction [HPr protein]-O-phospho-L-serine + phosphate + H(+) = [HPr protein]-L-serine + diphosphate. Functionally, catalyzes the ATP- as well as the pyrophosphate-dependent phosphorylation of a specific serine residue in HPr, a phosphocarrier protein of the phosphoenolpyruvate-dependent sugar phosphotransferase system (PTS). HprK/P also catalyzes the pyrophosphate-producing, inorganic phosphate-dependent dephosphorylation (phosphorolysis) of seryl-phosphorylated HPr (P-Ser-HPr). The protein is HPr kinase/phosphorylase of Leptospira biflexa serovar Patoc (strain Patoc 1 / Ames).